We begin with the raw amino-acid sequence, 280 residues long: Foldase protein PrsA 4 (280 aa).

The N-terminal stretch at 1–21 is a signal peptide; sequence MKRKKLVIGSILMGMTLSLSA. Cys-22 carries N-palmitoyl cysteine lipidation. Cys-22 carries the S-diacylglycerol cysteine lipid modification. The region spanning 132–222 is the PpiC domain; the sequence is KPKLQVSHIL…FGYHIIKLTD (91 aa).

Belongs to the PrsA family.

The protein resides in the cell membrane. The catalysed reaction is [protein]-peptidylproline (omega=180) = [protein]-peptidylproline (omega=0). In terms of biological role, plays a major role in protein secretion by helping the post-translocational extracellular folding of several secreted proteins. This Bacillus cereus (strain ATCC 14579 / DSM 31 / CCUG 7414 / JCM 2152 / NBRC 15305 / NCIMB 9373 / NCTC 2599 / NRRL B-3711) protein is Foldase protein PrsA 4 (prsA4).